Here is a 123-residue protein sequence, read N- to C-terminus: Late histone H2B.L3 (123 aa).

Positions 1–10 are enriched in low complexity; it reads MPAKAQAAGK. The interval 1-32 is disordered; the sequence is MPAKAQAAGKKGSKKAKAPKPSGDKKRRRKRK. Ser110 carries an O-linked (GlcNAc) serine glycan. Residue Lys118 forms a Glycyl lysine isopeptide (Lys-Gly) (interchain with G-Cter in ubiquitin) linkage.

The protein belongs to the histone H2B family. As to quaternary structure, the nucleosome is a histone octamer containing two molecules each of H2A, H2B, H3 and H4 assembled in one H3-H4 heterotetramer and two H2A-H2B heterodimers. The octamer wraps approximately 147 bp of DNA. In terms of processing, monoubiquitination of Lys-118 gives a specific tag for epigenetic transcriptional activation and is also prerequisite for histone H3 'Lys-4' and 'Lys-79' methylation. GlcNAcylation at Ser-110 promotes monoubiquitination of Lys-118. It fluctuates in response to extracellular glucose, and associates with transcribed genes.

It localises to the nucleus. The protein localises to the chromosome. In terms of biological role, core component of nucleosome. Nucleosomes wrap and compact DNA into chromatin, limiting DNA accessibility to the cellular machineries which require DNA as a template. Histones thereby play a central role in transcription regulation, DNA repair, DNA replication and chromosomal stability. DNA accessibility is regulated via a complex set of post-translational modifications of histones, also called histone code, and nucleosome remodeling. The protein is Late histone H2B.L3 of Strongylocentrotus purpuratus (Purple sea urchin).